A 207-amino-acid polypeptide reads, in one-letter code: C-type lectin domain family 2 member D (207 aa).

The Cytoplasmic portion of the chain corresponds to 1 to 41 (MCVTKASLPMLSPTGSPQEVEVGKILQGKRHGTISPESCAK). A phosphoserine mark is found at serine 7 and serine 12. A helical; Signal-anchor for type II membrane protein transmembrane segment spans residues 42-62 (LYCYYGVIMVLTVAVIALSVA). Residues 63 to 207 (LSATKTEQIP…LHCQTPFFPS (145 aa)) lie on the Extracellular side of the membrane. Cysteine 80 and cysteine 91 form a disulfide bridge. The region spanning 87–202 (VENKCFYFSE…LNSYSLHCQT (116 aa)) is the C-type lectin domain. Asparagine 100 carries N-linked (GlcNAc...) asparagine glycosylation.

Homodimer; disulfide-linked. In terms of processing, N-glycosylated. Detected in fetal heart, brain, lung, chondrocytes, perichondrium and osteoblasts, and in adult splenocytes, thymocytes, lymph-node cells, osteoblasts, growth plate chondrocytes and skeletal muscle overlying the bone (at protein level). Ubiquitous. Detected in thymus, bone marrow, lung, gut, heart, skeletal muscle, ovary, spleen, ileum, liver and kidney.

The protein resides in the cell membrane. In terms of biological role, receptor for KLRB1B that protects target cells against natural killer cell-mediated lysis. Inhibits osteoclast formation. Binds high molecular weight sulfated glycosaminoglycans. This Mus musculus (Mouse) protein is C-type lectin domain family 2 member D (Clec2d).